Reading from the N-terminus, the 106-residue chain is Replication protein A 14 kDa subunit (106 aa).

It belongs to the replication factor A protein 3 family. Component of the heterotrimeric canonical replication protein A complex (RPA). Interacts with RPA1B, RPA2A, RPA2B and RPA2C.

It localises to the nucleus. In terms of biological role, as part of the replication protein A (RPA/RP-A), a single-stranded DNA-binding heterotrimeric complex, may play an essential role in DNA replication, recombination and repair. Binds and stabilizes single-stranded DNA intermediates, preventing complementary DNA reannealing and recruiting different proteins involved in DNA metabolism. The chain is Replication protein A 14 kDa subunit (RPA3) from Oryza sativa subsp. japonica (Rice).